A 310-amino-acid chain; its full sequence is Syntaxin-81 (310 aa).

The Cytoplasmic segment spans residues 1–289 (MSRFRDRTED…QAIQRNSSSR (289 aa)). A coiled-coil region spans residues 77-114 (RTTEQEKDSIEQEVAAFIKACKEQIDILINSIRNEEAN). The chain crosses the membrane as a helical; Anchor for type IV membrane protein span at residues 290 to 310 (TFLLLFFFVLTFSVLFLDWYS).

Belongs to the syntaxin family. As to quaternary structure, part of the t-SNARE complex. Interacts with MAG2.

It is found in the membrane. Vesicle trafficking protein that functions in the secretory pathway. The chain is Syntaxin-81 (SYP81) from Arabidopsis thaliana (Mouse-ear cress).